A 123-amino-acid polypeptide reads, in one-letter code: Large ribosomal subunit protein bL12 (123 aa).

The protein belongs to the bacterial ribosomal protein bL12 family. In terms of assembly, homodimer. Part of the ribosomal stalk of the 50S ribosomal subunit. Forms a multimeric L10(L12)X complex, where L10 forms an elongated spine to which 2 to 4 L12 dimers bind in a sequential fashion. Binds GTP-bound translation factors.

In terms of biological role, forms part of the ribosomal stalk which helps the ribosome interact with GTP-bound translation factors. Is thus essential for accurate translation. In Laribacter hongkongensis (strain HLHK9), this protein is Large ribosomal subunit protein bL12.